Reading from the N-terminus, the 501-residue chain is Lysine--tRNA ligase (501 aa).

2 residues coordinate Mg(2+): Glu-404 and Glu-411.

The protein belongs to the class-II aminoacyl-tRNA synthetase family. Homodimer. Mg(2+) is required as a cofactor.

It is found in the cytoplasm. It carries out the reaction tRNA(Lys) + L-lysine + ATP = L-lysyl-tRNA(Lys) + AMP + diphosphate. This is Lysine--tRNA ligase (lysS) from Campylobacter jejuni subsp. jejuni serotype O:2 (strain ATCC 700819 / NCTC 11168).